The following is a 237-amino-acid chain: 2,3-bisphosphoglycerate-dependent phosphoglycerate mutase (237 aa).

Substrate contacts are provided by residues 10–17 (RHGESKWN), 23–24 (TG), Arg-62, 89–92 (ERHY), Lys-100, 116–117 (RR), and 185–186 (GN). The active-site Tele-phosphohistidine intermediate is His-11. Glu-89 (proton donor/acceptor) is an active-site residue.

The protein belongs to the phosphoglycerate mutase family. BPG-dependent PGAM subfamily. Homodimer.

It catalyses the reaction (2R)-2-phosphoglycerate = (2R)-3-phosphoglycerate. It functions in the pathway carbohydrate degradation; glycolysis; pyruvate from D-glyceraldehyde 3-phosphate: step 3/5. In terms of biological role, catalyzes the interconversion of 2-phosphoglycerate and 3-phosphoglycerate. The polypeptide is 2,3-bisphosphoglycerate-dependent phosphoglycerate mutase (Baumannia cicadellinicola subsp. Homalodisca coagulata).